The following is a 335-amino-acid chain: MIEIDGSFGEGGGQILRTSLTLSSLTKKPFRIYNIRANRPKPGLQRQHLTAVNAVKILTNATVKGDYVGSTELIFSPGDIQEKGDFVFDIGTAGSTTLILQTILPLLLNRKLTVTIKGGTDVPKSPSIDYIRLVFSKVLERIGISFNVELIKRGHYPEGGGEIRISNVRGEPQRFSITEFGQLEGFVGISHVSSLPVHIADRQKSSAEKILRRLKDKIDIRLDVREGEISKGSGICLSAIGKYGIIGADALGERGKRAETVGEEAALKLLEELKTNAAFDSHMGDMLMLYASLYQGEYTASKLTLHSITNEKVIRKFIDIKGEIKGSSPFLFRVQ.

ATP contacts are provided by residues Q101 and 282–285 (HMGD). Residue H306 is the Tele-AMP-histidine intermediate of the active site.

This sequence belongs to the RNA 3'-terminal cyclase family. Type 1 subfamily.

It is found in the cytoplasm. It carries out the reaction a 3'-end 3'-phospho-ribonucleotide-RNA + ATP = a 3'-end 2',3'-cyclophospho-ribonucleotide-RNA + AMP + diphosphate. Functionally, catalyzes the conversion of 3'-phosphate to a 2',3'-cyclic phosphodiester at the end of RNA. The mechanism of action of the enzyme occurs in 3 steps: (A) adenylation of the enzyme by ATP; (B) transfer of adenylate to an RNA-N3'P to produce RNA-N3'PP5'A; (C) and attack of the adjacent 2'-hydroxyl on the 3'-phosphorus in the diester linkage to produce the cyclic end product. The biological role of this enzyme is unknown but it is likely to function in some aspects of cellular RNA processing. This chain is RNA 3'-terminal phosphate cyclase, found in Sulfolobus acidocaldarius (strain ATCC 33909 / DSM 639 / JCM 8929 / NBRC 15157 / NCIMB 11770).